A 319-amino-acid chain; its full sequence is Formimidoylglutamase (319 aa).

Residues His-131, Asp-154, His-156, Asp-158, Cys-248, and Asp-250 each coordinate Mn(2+).

Belongs to the arginase family. Requires Mn(2+) as cofactor.

It carries out the reaction N-formimidoyl-L-glutamate + H2O = formamide + L-glutamate. It functions in the pathway amino-acid degradation; L-histidine degradation into L-glutamate; L-glutamate from N-formimidoyl-L-glutamate (hydrolase route): step 1/1. Functionally, catalyzes the conversion of N-formimidoyl-L-glutamate to L-glutamate and formamide. The protein is Formimidoylglutamase of Legionella pneumophila (strain Lens).